A 313-amino-acid chain; its full sequence is Ribosomal RNA small subunit methyltransferase H (313 aa).

S-adenosyl-L-methionine-binding positions include 35–37 (GGH), D55, F79, D101, and Q108.

This sequence belongs to the methyltransferase superfamily. RsmH family.

The protein localises to the cytoplasm. The enzyme catalyses cytidine(1402) in 16S rRNA + S-adenosyl-L-methionine = N(4)-methylcytidine(1402) in 16S rRNA + S-adenosyl-L-homocysteine + H(+). Functionally, specifically methylates the N4 position of cytidine in position 1402 (C1402) of 16S rRNA. The chain is Ribosomal RNA small subunit methyltransferase H from Klebsiella pneumoniae (strain 342).